The sequence spans 471 residues: Mannose-1-phosphate guanylyltransferase (471 aa).

This sequence belongs to the mannose-6-phosphate isomerase type 2 family.

The enzyme catalyses alpha-D-mannose 1-phosphate + GTP + H(+) = GDP-alpha-D-mannose + diphosphate. The protein operates within nucleotide-sugar biosynthesis; GDP-alpha-D-mannose biosynthesis; GDP-alpha-D-mannose from alpha-D-mannose 1-phosphate (GTP route): step 1/1. In terms of biological role, involved in GDP-mannose biosynthesis which serves as the activated sugar nucleotide precursor for mannose residues in cell surface polysaccharides. This enzyme participates in synthesis of the LPS O antigen. The polypeptide is Mannose-1-phosphate guanylyltransferase (manC) (Salmonella montevideo).